The chain runs to 748 residues: Chondroadherin-like protein (748 aa).

The signal sequence occupies residues 1 to 29; that stretch reads MERPQSSIWVFMLLLFMVLLQSPAWHVAA. The region spanning 30–61 is the LRRNT 1 domain; it reads QRCPQTCVCDNSRRHVTCRHQNLTEVPNTIPE. N-linked (GlcNAc...) asparagine glycosylation occurs at asparagine 51. LRR repeat units follow at residues 85–107, 108–131, 132–155, 156–179, 181–203, 204–227, 229–252, 253–275, and 276–299; these read PHLT…AFRG, LGRL…ALDG, LGSL…TFGA, LGSL…AFQG, LRTR…ALAG, LPAL…ALSQ, RSLA…GLAL, PGLR…AFAH, and CPRL…QVPG. One can recognise an LRRCT 1 domain in the interval 309-357; the sequence is NPLWCACHARPLLEWLVRARVRSDGACRGPRRLRGEALDTLRPSDLRCP. The tract at residues 352–389 is disordered; that stretch reads SDLRCPGDAAAGDGDGDEDEDRPAGPRAPPLRSPHGEA. One can recognise an LRRNT 2 domain in the interval 394-428; the sequence is PCPPACACVAETRHSTCDGRGLQAVPRGFPNDTQL. The cysteines at positions 395 and 410 are disulfide-linked. LRR repeat units lie at residues 423–446, 448–470, 471–494, 496–518, 519–542, 544–566, 567–590, 591–614, 616–639, and 641–665; these read PNDT…AFPG, RHLV…ALAG, LDRL…ALEG, PNLG…ALRA, LPTL…DLAG, RALR…ALGP, AREL…ALEG, LPAL…AFQP, GRSL…AFSG, and GKGL…GLSG. N-linked (GlcNAc...) asparagine glycosylation occurs at asparagine 625. In terms of domain architecture, LRRCT 2 spans 674 to 722; sequence NPFHCDCQLLPLHRWLTGLNLRVGATCATPPSVRGQKVKVAAPVFEACP. 2 cysteine pairs are disulfide-bonded: cysteine 678-cysteine 721 and cysteine 680-cysteine 700. The interval 728-748 is disordered; that stretch reads KAKRTPTSRGSARRTPSLSRH. The span at 734–748 shows a compositional bias: polar residues; that stretch reads TSRGSARRTPSLSRH.

The protein belongs to the small leucine-rich proteoglycan (SLRP) family. SLRP class IV subfamily. As to quaternary structure, associates with collagen and binds to collagen fibrils. As to expression, expressed in cartilage, including articular knee cartilage, where it localizes to the extracellular space in the area immediately surrounding the chondrocytes, not detected in any other tissues (at protein level).

It is found in the secreted. Its subcellular location is the extracellular space. The protein resides in the extracellular matrix. In terms of biological role, potential negative modulator of chondrocyte differentiation. Inhibits collagen fibrillogenesis in vitro. May influence chondrocyte's differentiation by acting on its cellular collagenous microenvironment. The polypeptide is Chondroadherin-like protein (Chadl) (Mus musculus (Mouse)).